Here is a 288-residue protein sequence, read N- to C-terminus: Pantothenate synthetase (288 aa).

Residue 30 to 37 (MGNLHAGH) coordinates ATP. His37 serves as the catalytic Proton donor. Gln61 is a (R)-pantoate binding site. A beta-alanine-binding site is contributed by Gln61. 149-152 (GLKD) lines the ATP pocket. Gln155 lines the (R)-pantoate pocket. Residues Ile178 and 186-189 (LSSR) contribute to the ATP site.

It belongs to the pantothenate synthetase family. In terms of assembly, homodimer.

It is found in the cytoplasm. It carries out the reaction (R)-pantoate + beta-alanine + ATP = (R)-pantothenate + AMP + diphosphate + H(+). The protein operates within cofactor biosynthesis; (R)-pantothenate biosynthesis; (R)-pantothenate from (R)-pantoate and beta-alanine: step 1/1. Functionally, catalyzes the condensation of pantoate with beta-alanine in an ATP-dependent reaction via a pantoyl-adenylate intermediate. The polypeptide is Pantothenate synthetase (Colwellia psychrerythraea (strain 34H / ATCC BAA-681) (Vibrio psychroerythus)).